The chain runs to 415 residues: MNEVLAKGKRAKEVARELVLKSTHQKNEALAAIANQLISETAYILEENKRDIEEGKAKGFSDSLLDRLMLNEQRIVDMTEGIKQLIELRDPVGECVSAWERPNGLSIQEMRVPLGVVGMIYEARPNVTVDAATICLKTGNAVILRGSSSAIHSNKAIVAVIHRALKQTSLPEESVQLIEDTTRDSAKQLFTMNDYLDVLIPRGGKQLIDTVVREASVPVLETGAGNCHIFIDETADKQMAFDIIINAKTQRPSVCNAIETIVLHENWAQQYGSELFSSLKERGVELRGDQKALAMDSSIVLASEEDWGTEFLSLTLAVKIVSSIEEAIHHINTYGSMHSEAIISENEENVSKFFVSVDAAALYHNASTRFTDGSEFGFGAEIGISTQKLHVRGPMGLPALTSTKYIIRGNGQIRK.

This sequence belongs to the gamma-glutamyl phosphate reductase family.

Its subcellular location is the cytoplasm. The catalysed reaction is L-glutamate 5-semialdehyde + phosphate + NADP(+) = L-glutamyl 5-phosphate + NADPH + H(+). It participates in amino-acid biosynthesis; L-proline biosynthesis; L-glutamate 5-semialdehyde from L-glutamate: step 2/2. Its function is as follows. Catalyzes the NADPH-dependent reduction of L-glutamate 5-phosphate into L-glutamate 5-semialdehyde and phosphate. The product spontaneously undergoes cyclization to form 1-pyrroline-5-carboxylate. In Bacillus cereus (strain AH187), this protein is Gamma-glutamyl phosphate reductase.